Here is a 2201-residue protein sequence, read N- to C-terminus: RNA-directed RNA polymerase L (2201 aa).

An endonuclease region spans residues 26–285 (KNIMLAQTQI…VCSKSVEYTF (260 aa)). Residues Glu51, Asp88, and Glu101 each contribute to the Mn(2+) site. The active site involves Lys114. Positions 1156–1352 (LDMKSVVRQS…FLSDRLNKFV (197 aa)) constitute a RdRp catalytic domain. Asp1312 provides a ligand contact to Mg(2+).

Belongs to the Bunyavirales RNA polymerase family. In terms of assembly, homomultimer; the oligomeric structure is essential for the polymerase activity. Interacts with nucleoprotein N. Interacts with protein Z; this interaction inhibits viral transcription and replication, Z partially blocks the product exit tunnel for the releasing nascent RNA product. The cofactor is Mn(2+). Mg(2+) is required as a cofactor.

It localises to the virion. Its subcellular location is the host cytoplasm. It catalyses the reaction RNA(n) + a ribonucleoside 5'-triphosphate = RNA(n+1) + diphosphate. RNA-dependent RNA polymerase, which is responsible for the replication and transcription of the viral RNA genome using antigenomic RNA as an intermediate. During transcription, synthesizes subgenomic RNAs and assures their capping by a cap-snatching mechanism, which involves the endonuclease activity cleaving the host capped pre-mRNAs. These short capped RNAs are then used as primers for viral transcription. The 3'-end of subgenomic mRNAs molecules are heterogeneous and not polyadenylated. The replicase function is to direct synthesis of antigenomic and genomic RNA which are encapsidated and non capped. As a consequence of the use of the same enzyme for both transcription and replication, these mechanisms need to be well coordinated. These processes may be regulated by proteins N and Z in a dose-dependent manner. Z protein inhibits the viral polymerase L und thus the viral transcription and RNA synthesis. The polypeptide is RNA-directed RNA polymerase L (Oecomys bicolor (Bicolored arboreal rice rat)).